Reading from the N-terminus, the 134-residue chain is Small ribosomal subunit protein uS9 (134 aa).

The disordered stretch occupies residues 109-134; the sequence is KGDPRRKEPKKFGGRGARARRQKSYR. Positions 115–134 are enriched in basic residues; that stretch reads KEPKKFGGRGARARRQKSYR.

Belongs to the universal ribosomal protein uS9 family.

This Methanopyrus kandleri (strain AV19 / DSM 6324 / JCM 9639 / NBRC 100938) protein is Small ribosomal subunit protein uS9.